The sequence spans 57 residues: Large ribosomal subunit protein bL32 (57 aa).

The interval 1–38 (MAVQQNKPTRSKRGMRRSHDALTAVTSLSVDQTSGEKH) is disordered. The segment covering 24–33 (AVTSLSVDQT) has biased composition (polar residues).

Belongs to the bacterial ribosomal protein bL32 family.

This Enterobacter sp. (strain 638) protein is Large ribosomal subunit protein bL32.